Consider the following 343-residue polypeptide: 4-hydroxy-2-oxovalerate aldolase 2 (343 aa).

Residues 8-260 enclose the Pyruvate carboxyltransferase domain; the sequence is ITVHDMSLRD…ETGVDVFAIS (253 aa). Position 16 to 17 (16 to 17) interacts with substrate; sequence RD. Mn(2+) is bound at residue Asp17. The active-site Proton acceptor is His20. Residues Ser170 and His199 each contribute to the substrate site. 2 residues coordinate Mn(2+): His199 and His201. Tyr290 is a binding site for substrate.

This sequence belongs to the 4-hydroxy-2-oxovalerate aldolase family.

It catalyses the reaction (S)-4-hydroxy-2-oxopentanoate = acetaldehyde + pyruvate. This chain is 4-hydroxy-2-oxovalerate aldolase 2, found in Burkholderia lata (strain ATCC 17760 / DSM 23089 / LMG 22485 / NCIMB 9086 / R18194 / 383).